The primary structure comprises 477 residues: Zinc metalloproteinase/disintegrin (477 aa).

The signal sequence occupies residues 1-19 (MIQVLLVIICLAVPYQGSS). The propeptide occupies 20–186 (IILESGNVND…PIKKASQSNL (167 aa)). Positions 192 to 388 (RYIELVIVAD…QKPQCILNKP (197 aa)) constitute a Peptidase M12B domain. Ca(2+) is bound by residues E195 and D279. Disulfide bonds link C303-C383, C343-C367, and C345-C350. H328 lines the Zn(2+) pocket. E329 is an active-site residue. Zn(2+) is bound by residues H332 and H338. Ca(2+) contacts are provided by C383 and N386. A propeptide spanning residues 389-404 (LRTDTVSTPVSGNELL) is cleaved from the precursor. Residues 396–477 (TPVSGNELLE…AGCPRNPFHA (82 aa)) enclose the Disintegrin domain. Intrachain disulfides connect C410/C425, C412/C420, C419/C442, C433/C439, C438/C463, and C451/C470. The Cell attachment site motif lies at 455 to 457 (RGD).

This sequence belongs to the venom metalloproteinase (M12B) family. P-II subfamily. P-IIa sub-subfamily. As to quaternary structure, monomer. Requires Zn(2+) as cofactor. Expressed by the venom gland.

It localises to the secreted. Its function is as follows. Impairs hemostasis in the envenomed animal. Functionally, inhibits platelet aggregation induced by ADP, thrombin, platelet-activating factor and collagen. Acts by inhibiting fibrinogen interaction with platelet receptors GPIIb/GPIIIa (ITGA2B/ITGB3). This Gloydius halys (Chinese water mocassin) protein is Zinc metalloproteinase/disintegrin.